A 260-amino-acid polypeptide reads, in one-letter code: MTTGLLQGKKGLITGIANNMSISWAIAQLAKKHGAELWFTYQSEVLEKRVKPLAEEIGCNFVSELDVTNPKSISNLFDDIKEKWGSFDFLLHGMAFADKNELKGRYVDTSLENFHNSLHISCYSLLELSRSAEALMHDGGSIVTLTYYGAEKVIPNYNVMGISKAALEASVKYLATDLGENNIRVNAISAGPIKTLASSAIGDFSTMLKSHAATAPLKRNTTQEDVGGAAVYLFSNLSKGVTGEIHYVDCGYNIMGSNKL.

Residues glycine 15, serine 21 to isoleucine 22, glutamine 42, aspartate 66 to valine 67, and methionine 94 contribute to the NAD(+) site. Alanine 97 lines the substrate pocket. Catalysis depends on proton acceptor residues tyrosine 147 and tyrosine 157. NAD(+)-binding positions include lysine 164 and isoleucine 193–alanine 197.

It belongs to the short-chain dehydrogenases/reductases (SDR) family. FabI subfamily. Homotetramer.

It catalyses the reaction a 2,3-saturated acyl-[ACP] + NAD(+) = a (2E)-enoyl-[ACP] + NADH + H(+). It functions in the pathway lipid metabolism; fatty acid biosynthesis. Its function is as follows. Catalyzes the reduction of a carbon-carbon double bond in an enoyl moiety that is covalently linked to an acyl carrier protein (ACP). Involved in the elongation cycle of fatty acid which are used in the lipid metabolism. In Rickettsia felis (strain ATCC VR-1525 / URRWXCal2) (Rickettsia azadi), this protein is Enoyl-[acyl-carrier-protein] reductase [NADH] FabI (fabI).